The following is a 149-amino-acid chain: Chromophore lyase CpcS/CpeS homolog (149 aa).

This sequence belongs to the CpcS/CpeS biliprotein lyase family.

It is found in the plastid. The protein resides in the chloroplast. Functionally, might function to covalently attach a chromophore to Cys residue(s) of phycobiliproteins. This chain is Chromophore lyase CpcS/CpeS homolog, found in Porphyra purpurea (Red seaweed).